A 120-amino-acid polypeptide reads, in one-letter code: MGYTIQLDKDGDYYWDEDPTHHDPYMRANATSHAAASHAAASHAAASHAAAPHTAVHHAFHEPFIKLNLTDKNIFNGLGFILIVIFIYLLIITLQQMLTRHIYNTVQQCVKTHLDSKNLQ.

N-linked (GlcNAc...) asparagine; by host glycosylation is found at N29 and N68. Residues 74 to 94 traverse the membrane as a helical segment; it reads IFNGLGFILIVIFIYLLIITL.

This sequence belongs to the asfivirus B117L family.

Its subcellular location is the host membrane. The protein localises to the virion. This is an uncharacterized protein from Ornithodoros (relapsing fever ticks).